The sequence spans 246 residues: DNA polymerase sliding clamp (246 aa).

This sequence belongs to the PCNA family. In terms of assembly, homotrimer. The subunits circularize to form a toroid; DNA passes through its center. Replication factor C (RFC) is required to load the toroid on the DNA.

Functionally, sliding clamp subunit that acts as a moving platform for DNA processing. Responsible for tethering the catalytic subunit of DNA polymerase and other proteins to DNA during high-speed replication. This Thermoplasma volcanium (strain ATCC 51530 / DSM 4299 / JCM 9571 / NBRC 15438 / GSS1) protein is DNA polymerase sliding clamp.